Reading from the N-terminus, the 517-residue chain is MDIIGGQHLRQMWDDLADVYGHKTALICESSGGVVNRYSYLELNQEINRTANLFYTLGIRKGDKVALHLDNCPEFIFCWFGLVKIGAIMVPINARLLREESAWILQNSQACLLVTSAQFYPMYQQIQQEDATQLRHICLTDVELPADDGVSSFTQLKNQQPVTLCYAPPLSTDDTAEILFTSGTTSRPKGVVITHYNLRFAGYYSAWQCALRDDDVYLTVMPAFHIDCQCTAAMAAFSAGATFVLVEKYSARAFWGQVQKYRATVTECIPMMIRTLMVQPPSVNDRQHHLREVMFYLNLSEQEKDAFCERFGVRLLTSYGMTETIVGIIGDRPGDKRRWPSIGRAGFCYEAEIRDDHNRPLPAGEIGEICIKGVPGKTIFKEYFLNPQATARVLEADGWLHTGDTGYRDEEGFFYFVDRRCNMIKRGGENVSCVELENIIAAHPKIQDIVVVGIKDSIRDEAIKAFVVLNEGEILSEEEFFNFCEQNMAKFKVPSYLEIRKDLPRNCSGKIIRKALK.

This sequence belongs to the ATP-dependent AMP-binding enzyme family.

It carries out the reaction 4-(trimethylamino)butanoate + ATP + CoA = 4-(trimethylamino)butanoyl-CoA + AMP + diphosphate. The catalysed reaction is crotonobetaine + ATP + CoA = crotonobetainyl-CoA + AMP + diphosphate. The enzyme catalyses (R)-carnitine + ATP + CoA = (R)-carnitinyl-CoA + AMP + diphosphate. It functions in the pathway amine and polyamine metabolism; carnitine metabolism. Catalyzes the transfer of CoA to carnitine, generating the initial carnitinyl-CoA needed for the CaiB reaction cycle. Also has activity toward crotonobetaine and gamma-butyrobetaine. The polypeptide is Crotonobetaine/carnitine--CoA ligase (Escherichia fergusonii (strain ATCC 35469 / DSM 13698 / CCUG 18766 / IAM 14443 / JCM 21226 / LMG 7866 / NBRC 102419 / NCTC 12128 / CDC 0568-73)).